The chain runs to 462 residues: MRLLDSATKEKIKLDKKDISIYLCGPTVYDDAHLGHARSSVCFDLLRRVLLANGNRVKFARNYTDIDDKILKKMAQSCQTLEEITEFYIKSYEEDMRTLNVLDPDFKPRATHYIIAMLDLIKKLAKDGFVYTLEDGIYFDTSKDEKYLSLSSRNLEENISRLSNEVQKRNESDFVLWKFDENFYESEFGKGRPGWHTECVAMIDSIFENTLDIHAGGIDLLFPHHENEAAQCRCGCKRKLANIWLHNGFVKIDGEKMSKSLNNSFFIKDALKEFMGEALRFYLLSSHYRSHFNYSLSDLENAKKRLDKIYRLKKRLDLGEISDFDVLNDIEIKSEIAKQILEILNDDLNISKALALLDDFISNANLELDKESKNKILKQNIKEALSELAKIFGFGFMDATLYFQWGVSKEEREEIEKLILERTEAKKNKDFNTADAIREQLSSKKITLLDTPNGTIWEKMNA.

A Zn(2+)-binding site is contributed by Cys24. A 'HIGH' region motif is present at residues 26–36 (PTVYDDAHLGH). Residues Cys199, His224, and Glu228 each coordinate Zn(2+). A 'KMSKS' region motif is present at residues 256-260 (KMSKS). An ATP-binding site is contributed by Lys259.

The protein belongs to the class-I aminoacyl-tRNA synthetase family. In terms of assembly, monomer. It depends on Zn(2+) as a cofactor.

It is found in the cytoplasm. The enzyme catalyses tRNA(Cys) + L-cysteine + ATP = L-cysteinyl-tRNA(Cys) + AMP + diphosphate. In Campylobacter jejuni subsp. doylei (strain ATCC BAA-1458 / RM4099 / 269.97), this protein is Cysteine--tRNA ligase.